A 451-amino-acid polypeptide reads, in one-letter code: 3-carboxy-cis,cis-muconate cycloisomerase (451 aa).

This sequence belongs to the class-II fumarase/aspartase family. Homotetramer.

The catalysed reaction is 2-(carboxymethyl)-5-oxo-2,5-dihydro-2-furoate = 3-carboxy-cis,cis-muconate + H(+). The protein operates within aromatic compound metabolism; beta-ketoadipate pathway; 5-oxo-4,5-dihydro-2-furylacetate from 3-carboxy-cis,cis-muconate: step 1/2. Functionally, catalyzes an anti cycloisomerization. In Acinetobacter baylyi (strain ATCC 33305 / BD413 / ADP1), this protein is 3-carboxy-cis,cis-muconate cycloisomerase (pcaB).